A 473-amino-acid polypeptide reads, in one-letter code: Sulfate adenylyltransferase subunit 1 (473 aa).

The tr-type G domain maps to 19–238 (KTLLKFLTCG…IKIKNSISSE (220 aa)). Positions 28–35 (GSVDDGKS) are G1. Position 28 to 35 (28 to 35 (GSVDDGKS)) interacts with GTP. Positions 86 to 90 (GITID) are G2. Residues 107 to 110 (DTPG) are G3. GTP is bound by residues 107–111 (DTPGH) and 162–165 (NKMD). The interval 162-165 (NKMD) is G4. Residues 200–202 (SAL) are G5.

It belongs to the TRAFAC class translation factor GTPase superfamily. Classic translation factor GTPase family. CysN/NodQ subfamily. In terms of assembly, heterodimer composed of CysD, the smaller subunit, and CysN.

It carries out the reaction sulfate + ATP + H(+) = adenosine 5'-phosphosulfate + diphosphate. It functions in the pathway sulfur metabolism; hydrogen sulfide biosynthesis; sulfite from sulfate: step 1/3. In terms of biological role, with CysD forms the ATP sulfurylase (ATPS) that catalyzes the adenylation of sulfate producing adenosine 5'-phosphosulfate (APS) and diphosphate, the first enzymatic step in sulfur assimilation pathway. APS synthesis involves the formation of a high-energy phosphoric-sulfuric acid anhydride bond driven by GTP hydrolysis by CysN coupled to ATP hydrolysis by CysD. In Buchnera aphidicola subsp. Acyrthosiphon pisum (strain APS) (Acyrthosiphon pisum symbiotic bacterium), this protein is Sulfate adenylyltransferase subunit 1.